A 258-amino-acid polypeptide reads, in one-letter code: Transcription factor ORG3 (258 aa).

A bHLH domain is found at 76-128 (VKKLNHNASERDRRRKINSLFSSLRSCLPASGQSKKLSIPATVSRSLKYIPEL).

As to quaternary structure, homodimer. As to expression, expressed in vascular tissues. Detected in roots.

The protein resides in the nucleus. This is Transcription factor ORG3 (ORG3) from Arabidopsis thaliana (Mouse-ear cress).